Reading from the N-terminus, the 362-residue chain is MTASGLYLNLSIGSADAPILQVDTTIATRGITAIFGPSGSGKTTLLRCIAGLTRATSGNILFNGAVWQDQTQFLAPHKRPIGYVFQDANLFSHLTALGNLQFAIKRANNASANELLDKVVALLGLQSLLNRYPNQLSGGEKQRVAIARALLICPQLLLMDEPLASLDEQRKQEILPYLEALHEEFSTPILYVSHAMNEVARLADNMLVLNNGTVVAHGNLNQVLTDTQSPTAQGEDTCVVLNATVESKDTKWQLICARISNAQLWIKAPDHATAINQTLRVRILARDVSLSLSEHSDSTILNKLAATVISISDDTDSAMALVKLAVGSDTLLARITRKSAHHLALQPNMQLWAQVKSVAIVG.

Residues 1 to 236 (MTASGLYLNL…TQSPTAQGED (236 aa)) form the ABC transporter domain. 36–43 (GPSGSGKT) lines the ATP pocket. One can recognise a Mop domain in the interval 297–362 (DSTILNKLAA…AQVKSVAIVG (66 aa)).

It belongs to the ABC transporter superfamily. Molybdate importer (TC 3.A.1.8) family. In terms of assembly, the complex is composed of two ATP-binding proteins (ModC), two transmembrane proteins (ModB) and a solute-binding protein (ModA).

It localises to the cell inner membrane. It carries out the reaction molybdate(out) + ATP + H2O = molybdate(in) + ADP + phosphate + H(+). Its function is as follows. Part of the ABC transporter complex ModABC involved in molybdenum import. Responsible for energy coupling to the transport system. The chain is Molybdenum import ATP-binding protein ModC from Saccharophagus degradans (strain 2-40 / ATCC 43961 / DSM 17024).